The chain runs to 141 residues: Ly6/PLAUR domain-containing protein 1 (141 aa).

The signal sequence occupies residues 1-20 (MWVLGIAATFCGLFLLPGFA). 6 cysteine pairs are disulfide-bonded: Cys-25-Cys-54, Cys-28-Cys-37, Cys-46-Cys-71, Cys-77-Cys-100, Cys-88-Cys-97, and Cys-101-Cys-106. Residues 25 to 107 (CYQCEEFQLN…ISCCNTPLCN (83 aa)) enclose the UPAR/Ly6 domain. Residue Asn-45 is glycosylated (N-linked (GlcNAc...) asparagine). Ser-117 carries the GPI-anchor amidated serine lipid modification. A propeptide spans 118-141 (ASALRPGLRTTILFLKLALFSAHC) (removed in mature form).

As to quaternary structure, interacts with CHRNA4 and nAChRs containing alpha-4:beta-2 (CHRNA4:CHRNB2) and alpha-7 (CHRNA7) subunits.

It localises to the cell membrane. Functionally, believed to act as a modulator of nicotinic acetylcholine receptors (nAChRs) activity. In vitro increases receptor desensitization and decreases affinity for ACh of alpha-4:beta-2-containing nAChRs. May play a role in the intracellular trafficking of alpha-4:beta-2 and alpha-7-containing nAChRs and may inhibit their expression at the cell surface. May be involved in the control of anxiety. This chain is Ly6/PLAUR domain-containing protein 1 (LYPD1), found in Homo sapiens (Human).